The following is a 271-amino-acid chain: Zinc finger protein 501 (271 aa).

9 consecutive C2H2-type zinc fingers follow at residues 22–44 (SKCS…QRIH), 50–72 (YVCS…LRIH), 78–100 (YKCN…LRIH), 106–128 (YKCN…QRIH), 134–156 (YKCT…QRSH), 162–184 (FKCN…QRIH), 190–212 (YTCT…ERTH), 218–240 (YKCS…YRIH), and 246–268 (YECV…QRLH).

This sequence belongs to the krueppel C2H2-type zinc-finger protein family.

The protein localises to the nucleus. The protein resides in the nucleolus. In terms of biological role, may be involved in transcriptional regulation. Essential for Golgi structural integrity. In Homo sapiens (Human), this protein is Zinc finger protein 501 (ZNF501).